The primary structure comprises 105 residues: Heat shock protein HspQ (105 aa).

Residues 75 to 105 (GEMQEEHPEQPSMDELARSIRQQLQAPRLRN) are disordered.

Belongs to the HspQ family.

It is found in the cytoplasm. In terms of biological role, involved in the degradation of certain denaturated proteins, including DnaA, during heat shock stress. The polypeptide is Heat shock protein HspQ (Cronobacter sakazakii (strain ATCC BAA-894) (Enterobacter sakazakii)).